The chain runs to 332 residues: Serpentine receptor class alpha-10 (332 aa).

The Extracellular segment spans residues 1 to 26; the sequence is MTSSNISICATEDQMVLQTSLLLRVN. Residues 27 to 47 traverse the membrane as a helical segment; sequence VILMTTVAIFTFVLTYRALFI. Residues 48–64 lie on the Cytoplasmic side of the membrane; sequence LKQRPIFHKSTKILLYT. Residues 65 to 85 traverse the membrane as a helical segment; it reads SLIFVNIHEIIFMVIQCVAFI. The Extracellular segment spans residues 86–109; that stretch reads RSFTLSDKPCEIMRTTLECRFKNH. Residues 110–132 form a helical membrane-spanning segment; the sequence is VLIFGIAGMNFNQFGLTVDRLLA. Residues 133 to 146 lie on the Cytoplasmic side of the membrane; that stretch reads TVIPQTYSHLGSFP. Residues 147–167 form a helical membrane-spanning segment; that stretch reads GILISILVIGCSIAAPLIIAI. At 168–191 the chain is on the extracellular side; sequence GDPYDDIVPNCFFFPQHSAPRANV. A helical membrane pass occupies residues 192–212; sequence FLIILSALVIASIFLNLIIIF. Topologically, residues 213–239 are cytoplasmic; sequence ANKKLEKGTRYYVSQRYQKREALISTR. Residues 240-260 form a helical membrane-spanning segment; sequence IIVYIAASQFLGMVLYSTIVL. Residues 261-276 are Extracellular-facing; that stretch reads TLRLHKSMIPVSMYHN. A helical transmembrane segment spans residues 277–297; the sequence is IVWWAYTVPFAAVALPALLIH. Over 298–332 the chain is Cytoplasmic; that stretch reads RINLVGSNRKRVINRITAKVETQEEHMKSLKELWG.

Belongs to the nematode receptor-like protein sra family.

It localises to the membrane. The polypeptide is Serpentine receptor class alpha-10 (Caenorhabditis briggsae).